Consider the following 267-residue polypeptide: Mitochondrial S-adenosylmethionine carrier protein (267 aa).

Solcar repeat units follow at residues 4 to 77 (REFT…TKSV), 86 to 168 (LAPI…LKAV), and 177 to 265 (LDSW…VRRT). A run of 6 helical transmembrane segments spans residues 5 to 25 (EFTA…LTLF), 49 to 69 (IYAG…AFFV), 85 to 105 (NLAP…ACLI), 142 to 162 (RGYG…FPLW), 182 to 202 (AAVC…PLDV), and 238 to 258 (FAGS…FLGA).

It belongs to the mitochondrial carrier (TC 2.A.29) family.

It localises to the mitochondrion inner membrane. The catalysed reaction is S-adenosyl-L-homocysteine(out) + S-adenosyl-L-methionine(in) = S-adenosyl-L-homocysteine(in) + S-adenosyl-L-methionine(out). Mitochondrial S-adenosyl-L-methionine/S-adenosyl-L-homocysteine antiporter. Mediates the exchange of cytosolic S-adenosyl-L-methionine, the predominant methyl-group donor for macromolecule methylation processes, for mitochondrial S-adenosylhomocysteine(SAH), a by-product of methylation reactions. The protein is Mitochondrial S-adenosylmethionine carrier protein (slc25a26) of Danio rerio (Zebrafish).